Reading from the N-terminus, the 310-residue chain is Transcription factor RAX3 (310 aa).

HTH myb-type domains follow at residues 9–62 and 63–117; these read KANV…LNYL and RPNI…KKKL. 2 DNA-binding regions (H-T-H motif) span residues 38-62 and 90-113; these read WIAL…LNYL and WSII…NTRL.

Ubiquitous.

Its subcellular location is the nucleus. Its function is as follows. Transcription activator. Positively regulates axillary meristems (AMs) formation and development, especially during inflorescence. This chain is Transcription factor RAX3 (RAX3), found in Arabidopsis thaliana (Mouse-ear cress).